Consider the following 284-residue polypeptide: tRNA uridine(34) hydroxylase (284 aa).

In terms of domain architecture, Rhodanese spans 132-226; the sequence is AGRPVVMLDT…YFEEVGGAHY (95 aa). The active-site Cysteine persulfide intermediate is the Cys186.

The protein belongs to the TrhO family.

It carries out the reaction uridine(34) in tRNA + AH2 + O2 = 5-hydroxyuridine(34) in tRNA + A + H2O. Its function is as follows. Catalyzes oxygen-dependent 5-hydroxyuridine (ho5U) modification at position 34 in tRNAs. The sequence is that of tRNA uridine(34) hydroxylase from Burkholderia ambifaria (strain MC40-6).